Reading from the N-terminus, the 167-residue chain is Photosystem II extrinsic protein V (167 aa).

The N-terminal stretch at 1–30 (MVFKTLRRTLWLTLAALLAVFQFNLGAAQA) is a signal peptide. Heme c is bound by residues C67, C70, H71, and H122.

The protein belongs to the cytochrome c family. PsbV subfamily. PSII is composed of 1 copy each of membrane proteins PsbA, PsbB, PsbC, PsbD, PsbE, PsbF, PsbH, PsbI, PsbJ, PsbK, PsbL, PsbM, PsbT, PsbX, PsbY, PsbZ, Psb30/Ycf12, peripheral proteins PsbO, CyanoQ (PsbQ), PsbU, PsbV and a large number of cofactors. It forms dimeric complexes. Requires heme c as cofactor.

The protein resides in the cellular thylakoid membrane. Functionally, one of the extrinsic, lumenal subunits of photosystem II (PSII). PSII is a light-driven water plastoquinone oxidoreductase, using light energy to abstract electrons from H(2)O, generating a proton gradient subsequently used for ATP formation. The extrinsic proteins stabilize the structure of photosystem II oxygen-evolving complex (OEC), the ion environment of oxygen evolution and protect the OEC against heat-induced inactivation. Low-potential cytochrome c that plays a role in the OEC of PSII. The sequence is that of Photosystem II extrinsic protein V from Synechococcus elongatus (strain ATCC 33912 / PCC 7942 / FACHB-805) (Anacystis nidulans R2).